The chain runs to 763 residues: DNA polymerase 3 (763 aa).

Belongs to the DNA polymerase type-B family.

The catalysed reaction is DNA(n) + a 2'-deoxyribonucleoside 5'-triphosphate = DNA(n+1) + diphosphate. The polypeptide is DNA polymerase 3 (dpo3) (Saccharolobus shibatae (strain ATCC 51178 / DSM 5389 / JCM 8931 / NBRC 15437 / B12) (Sulfolobus shibatae)).